A 1142-amino-acid polypeptide reads, in one-letter code: Enamelin (1142 aa).

The N-terminal stretch at 1 to 39 (MLVLRCRLGTSFPKLDNLVPKGKMKILLVFLGLLGNSVA) is a signal peptide. Disordered stretches follow at residues 88–193 (QYQM…ISNE), 214–326 (YYSE…PNIR), 398–671 (PANL…QNRW), 874–955 (CCAG…LRRN), 1020–1048 (VIGTPDEGSNPEGIQSQVQENESERQQQR), and 1062–1092 (LAKHHSSTTGTPSSDGRQSPFDGDSITPTEN). Over residues 103 to 114 (HPRKSSAPKRHN) the composition is skewed to basic residues. N-linked (GlcNAc...) asparagine glycans are attached at residues asparagine 114 and asparagine 126. Positions 117 to 128 (DQTQETQKPNQT) are enriched in polar residues. The segment covering 140–162 (KQPSHNQPQPEEEAQPPQAFPPF) has biased composition (low complexity). Residues 170-186 (QQPPWQIPQRLPPPGYG) show a composition bias toward pro residues. Phosphoserine occurs at positions 191 and 216. Residues 223–234 (DFEKPKEEDPPK) are compositionally biased toward basic and acidic residues. Over residues 240 to 285 (TEPTANSTVTETNSTQPNPKGSQGGNDTSPTGNSTPGLNTGNNPPA) the composition is skewed to polar residues. N-linked (GlcNAc...) asparagine glycosylation is found at asparagine 245, asparagine 252, asparagine 265, and asparagine 296. Residues 429–442 (RNEKIQNPKEKPLG) are compositionally biased toward basic and acidic residues. 3 stretches are compositionally biased toward polar residues: residues 452 to 470 (KNPTSPWRNSQQYEVNKSN), 507 to 516 (SDGQTQSQNL), and 531 to 544 (SETNQSELKHSSYQ). N-linked (GlcNAc...) asparagine glycosylation occurs at asparagine 467. The N-linked (GlcNAc...) asparagine glycan is linked to asparagine 534. Residues 556-588 (AKEHFPAGRNTWDHQEISPPFKEDPGRQEEHLP) are compositionally biased toward basic and acidic residues. Positions 652-661 (NEEDPVDPTG) are enriched in acidic residues. Residues 924-934 (SPTSILPGQRN) show a composition bias toward polar residues. N-linked (GlcNAc...) asparagine glycosylation is present at asparagine 934. Positions 935-951 (SSEKRESQNPFRDDVST) are enriched in basic and acidic residues. N-linked (GlcNAc...) asparagine glycosylation is present at asparagine 1040. Polar residues predominate over residues 1068-1078 (STTGTPSSDGR).

Phosphorylated by FAM20C in vitro. In terms of tissue distribution, expressed in tooth particularly in odontoblast, ameloblast and cementoblast.

The protein localises to the secreted. Its subcellular location is the extracellular space. The protein resides in the extracellular matrix. Its function is as follows. Involved in the mineralization and structural organization of enamel. Involved in the extension of enamel during the secretory stage of dental enamel formation. This chain is Enamelin (ENAM), found in Homo sapiens (Human).